The sequence spans 281 residues: MKLHIISGVSGSGKSIALHALEDRDYYCIDNLPIYLLPTFAKRMQRDARQLRAAIGIDARNLPQELRQFPQILEEIERAGVHCHIIFLDASDTTLLKRFSETRRKHPLSHIPLAEAIHCERALLGTIAEKADLRIDTTCTTIHQLRDLISERIGDDARPGMSLLFQSFGYKHGVPLDADFVFDVRCLPNPHWEPHLRPLSGRDSEVIAYLKRHETVTQMQQDLITFLQHWLQRFQNTNRSYLTVAIGCTGGQHRSVYLAEQLKAHFHSLHARVLCRHRELS.

ATP is bound at residue 8–15 (GVSGSGKS). Position 58–61 (58–61 (DARN)) interacts with GTP.

It belongs to the RapZ-like family.

In terms of biological role, displays ATPase and GTPase activities. The protein is Nucleotide-binding protein Noc_2797 of Nitrosococcus oceani (strain ATCC 19707 / BCRC 17464 / JCM 30415 / NCIMB 11848 / C-107).